Reading from the N-terminus, the 424-residue chain is ATP-dependent RNA helicase WM6 (424 aa).

Positions 1-16 are enriched in acidic residues; that stretch reads MADNDDLLDYEDEEQT. Positions 1–27 are disordered; sequence MADNDDLLDYEDEEQTETTAVENQEAP. Residues 41–69 carry the Q motif motif; sequence SGFRDFLLKPEILRAIVDCGFEHPSEVQH. The Helicase ATP-binding domain occupies 72 to 246; sequence IPQAVLGMDI…KKFMQDPMEV (175 aa). 85–92 lines the ATP pocket; the sequence is AKSGMGKT. Residues 193 to 196 carry the DECD box motif; that stretch reads DECD. In terms of domain architecture, Helicase C-terminal spans 258 to 419; the sequence is GLQQHYVNLK…ELPEEIDLST (162 aa).

Belongs to the DEAD box helicase family. DECD subfamily. As to quaternary structure, component of the spliceosome. Interacts with the exon junction complex.

The protein localises to the nucleus speckle. The enzyme catalyses ATP + H2O = ADP + phosphate + H(+). Functionally, required for mRNA export out of the nucleus. Probable RNA helicase that may regulate entry into mitosis by down-regulating the expression of other genes whose activity may be rate-limiting for entry into mitosis during embryogenesis. Binds to salivary gland chromosomes and modifies position effect variegation. Promotes an open chromatin structure that favors transcription during development by regulating the spread of heterochromatin. The chain is ATP-dependent RNA helicase WM6 (Hel25E) from Drosophila melanogaster (Fruit fly).